A 342-amino-acid polypeptide reads, in one-letter code: Protein-ribulosamine 3-kinase, chloroplastic (342 aa).

Residues 1–46 (MANVALLSAASPSTSSAAPRLRHVARRRPSRRSACPRSAASRLSIM) constitute a chloroplast transit peptide. 141–143 (EFI) is an ATP binding site. Catalysis depends on Asp246, which acts as the Proton acceptor.

Belongs to the fructosamine kinase family.

The protein resides in the plastid. It is found in the chloroplast. The enzyme catalyses N(6)-D-ribulosyl-L-lysyl-[protein] + ATP = N(6)-(3-O-phospho-D-ribulosyl)-L-lysyl-[protein] + ADP + H(+). It catalyses the reaction N(6)-(D-erythrulosyl)-L-lysyl-[protein] + ATP = N(6)-(3-O-phospho-D-erythrulosyl)-L-lysyl-[protein] + ADP + H(+). Functionally, initiates a process leading to the deglycation of proteins. Phosphorylates low-molecular-mass and protein-bound erythrulosamines and ribulosamines, but not fructosamines or psicosamines, on the third carbon of the sugar moiety. Protein-bound erythrulosamine 3-phosphates and ribulosamine 3-phosphates are unstable and decompose under physiological conditions. The polypeptide is Protein-ribulosamine 3-kinase, chloroplastic (Oryza sativa subsp. indica (Rice)).